Reading from the N-terminus, the 398-residue chain is Phosphoglycerate kinase (398 aa).

Residues 21 to 23 (DFN), arginine 36, 59 to 62 (HLGR), arginine 119, and arginine 157 contribute to the substrate site. ATP-binding positions include lysine 208, glycine 296, glutamate 327, and 354–357 (GGDS).

It belongs to the phosphoglycerate kinase family. In terms of assembly, monomer.

The protein resides in the cytoplasm. The catalysed reaction is (2R)-3-phosphoglycerate + ATP = (2R)-3-phospho-glyceroyl phosphate + ADP. The protein operates within carbohydrate degradation; glycolysis; pyruvate from D-glyceraldehyde 3-phosphate: step 2/5. The chain is Phosphoglycerate kinase from Streptococcus equi subsp. zooepidemicus (strain MGCS10565).